The sequence spans 491 residues: Protein nucleotidyltransferase YdiU (491 aa).

G94, G96, R97, K117, D129, G130, R180, and R187 together coordinate ATP. Catalysis depends on D256, which acts as the Proton acceptor. Residues N257 and D266 each contribute to the Mg(2+) site. Residue D266 coordinates ATP.

The protein belongs to the SELO family. It depends on Mg(2+) as a cofactor. Mn(2+) serves as cofactor.

It catalyses the reaction L-seryl-[protein] + ATP = 3-O-(5'-adenylyl)-L-seryl-[protein] + diphosphate. The catalysed reaction is L-threonyl-[protein] + ATP = 3-O-(5'-adenylyl)-L-threonyl-[protein] + diphosphate. The enzyme catalyses L-tyrosyl-[protein] + ATP = O-(5'-adenylyl)-L-tyrosyl-[protein] + diphosphate. It carries out the reaction L-histidyl-[protein] + UTP = N(tele)-(5'-uridylyl)-L-histidyl-[protein] + diphosphate. It catalyses the reaction L-seryl-[protein] + UTP = O-(5'-uridylyl)-L-seryl-[protein] + diphosphate. The catalysed reaction is L-tyrosyl-[protein] + UTP = O-(5'-uridylyl)-L-tyrosyl-[protein] + diphosphate. In terms of biological role, nucleotidyltransferase involved in the post-translational modification of proteins. It can catalyze the addition of adenosine monophosphate (AMP) or uridine monophosphate (UMP) to a protein, resulting in modifications known as AMPylation and UMPylation. The chain is Protein nucleotidyltransferase YdiU from Brevibacillus brevis (strain 47 / JCM 6285 / NBRC 100599).